The chain runs to 357 residues: Cobalt-precorrin-5B C(1)-methyltransferase (357 aa).

It belongs to the CbiD family.

It catalyses the reaction Co-precorrin-5B + S-adenosyl-L-methionine = Co-precorrin-6A + S-adenosyl-L-homocysteine. It participates in cofactor biosynthesis; adenosylcobalamin biosynthesis; cob(II)yrinate a,c-diamide from sirohydrochlorin (anaerobic route): step 6/10. Functionally, catalyzes the methylation of C-1 in cobalt-precorrin-5B to form cobalt-precorrin-6A. The chain is Cobalt-precorrin-5B C(1)-methyltransferase from Gloeobacter violaceus (strain ATCC 29082 / PCC 7421).